We begin with the raw amino-acid sequence, 614 residues long: Bifunctional 3'-phosphoadenosine 5'-phosphosulfate synthase 2 (614 aa).

The segment at 1 to 215 (MSGIKKQKTE…VVELLQEQNI (215 aa)) is adenylyl-sulfate kinase. Residue 52 to 57 (GAGKTT) participates in ATP binding. Residues 79–82 (DNVR), phenylalanine 91, 96–99 (REEN), 122–123 (IS), lysine 161, and 174–175 (GF) contribute to the adenosine 5'-phosphosulfate site. Residues serine 197, 409–412 (QLRN), 511–515 (GRDPA), and alanine 553 each bind ATP. Residues 224–614 (IHELFVPENK…TDYYRSLEKN (391 aa)) form a sulfate adenylyltransferase region.

This sequence in the N-terminal section; belongs to the APS kinase family. In the C-terminal section; belongs to the sulfate adenylyltransferase family. In terms of tissue distribution, expressed in cartilage and adrenal gland.

The catalysed reaction is sulfate + ATP + H(+) = adenosine 5'-phosphosulfate + diphosphate. It catalyses the reaction adenosine 5'-phosphosulfate + ATP = 3'-phosphoadenylyl sulfate + ADP + H(+). The protein operates within sulfur metabolism; sulfate assimilation. Its function is as follows. Bifunctional enzyme with both ATP sulfurylase and APS kinase activity, which mediates two steps in the sulfate activation pathway. The first step is the transfer of a sulfate group to ATP to yield adenosine 5'-phosphosulfate (APS), and the second step is the transfer of a phosphate group from ATP to APS yielding 3'-phosphoadenylylsulfate/PAPS, the activated sulfate donor used by sulfotransferases. In mammals, PAPS is the sole source of sulfate while APS appears to only be an intermediate in the sulfate-activation pathway. Plays indirectly an important role in skeletogenesis during postnatal growth. The sequence is that of Bifunctional 3'-phosphoadenosine 5'-phosphosulfate synthase 2 (PAPSS2) from Homo sapiens (Human).